We begin with the raw amino-acid sequence, 420 residues long: MVPGPRPALLLLLFLLQAFLLWDSPVAASIQEQYCESLLPTTNHTGPQCNASVDLIGTCWPRSAVGQLVARPCPEYFYGVRYNTTNNGYRECLANGSWAARVNYSQCQEILSEEKRSKLHYHIAVIINYLGHCVSLGTLLVAFVLFMRLRSIRCLRNIIHWNLITAFILRNATWFVVQLTMNPEVHESNVVWCRLVTAAYNYFHVTNFFWMFGEGCYLHTAIVLTYSTDKLRKWMFICIGWCIPFPIIVAWAIGKLYYDNEKCWFGKRAGVYTDYIYQGPMILVLLINFIFLFNIVRILMTKLRASTTSETIQYRKAVKATLVLLSLLGITYMLFFVNPGEDEISRIVFIYFNSFLESFQGFFVSVFYCFLNSEVRSAVRKRWHRWQDKHSIRARVARAMSIPTSPTRVSFHSIKQSSAV.

Residues 1–28 (MVPGPRPALLLLLFLLQAFLLWDSPVAA) form the signal peptide. The Extracellular portion of the chain corresponds to 29-116 (SIQEQYCESL…CQEILSEEKR (88 aa)). Cystine bridges form between C35–C59, C49–C92, and C73–C107. 5 N-linked (GlcNAc...) asparagine glycosylation sites follow: N43, N50, N83, N95, and N103. The helical transmembrane segment at 117-147 (SKLHYHIAVIINYLGHCVSLGTLLVAFVLFM) threads the bilayer. The Cytoplasmic portion of the chain corresponds to 148–154 (RLRSIRC). Residues 155-179 (LRNIIHWNLITAFILRNATWFVVQL) form a helical membrane-spanning segment. The Extracellular portion of the chain corresponds to 180 to 194 (TMNPEVHESNVVWCR). C193 and C263 are disulfide-bonded. A helical membrane pass occupies residues 195 to 223 (LVTAAYNYFHVTNFFWMFGEGCYLHTAIV). Residues 224-230 (LTYSTDK) lie on the Cytoplasmic side of the membrane. Residues 231–258 (LRKWMFICIGWCIPFPIIVAWAIGKLYY) form a helical membrane-spanning segment. Residues 259 to 274 (DNEKCWFGKRAGVYTD) lie on the Extracellular side of the membrane. The chain crosses the membrane as a helical span at residues 275–300 (YIYQGPMILVLLINFIFLFNIVRILM). The Cytoplasmic portion of the chain corresponds to 301 to 311 (TKLRASTTSET). Residues 312–336 (IQYRKAVKATLVLLSLLGITYMLFF) form a helical membrane-spanning segment. The Extracellular segment spans residues 337–343 (VNPGEDE). Residues 344-373 (ISRIVFIYFNSFLESFQGFFVSVFYCFLNS) form a helical membrane-spanning segment. Over 374–420 (EVRSAVRKRWHRWQDKHSIRARVARAMSIPTSPTRVSFHSIKQSSAV) the chain is Cytoplasmic.

The protein belongs to the G-protein coupled receptor 2 family. In terms of assembly, interacts (via N-terminal extracellular domain) with CRF and UCN.

Its subcellular location is the cell membrane. G-protein coupled receptor for CRH (corticotropin-releasing factor) and UCN (urocortin). Has high affinity for CRH and UCN. Ligand binding causes a conformation change that triggers signaling via guanine nucleotide-binding proteins (G proteins) and down-stream effectors, such as adenylate cyclase. Promotes the activation of adenylate cyclase, leading to increased intracellular cAMP levels. The protein is Corticotropin-releasing factor receptor 1 (CRHR1) of Gallus gallus (Chicken).